Reading from the N-terminus, the 879-residue chain is Alanine--tRNA ligase (879 aa).

The Zn(2+) site is built by H565, H569, C674, and H678.

It belongs to the class-II aminoacyl-tRNA synthetase family. It depends on Zn(2+) as a cofactor.

It is found in the cytoplasm. It carries out the reaction tRNA(Ala) + L-alanine + ATP = L-alanyl-tRNA(Ala) + AMP + diphosphate. Functionally, catalyzes the attachment of alanine to tRNA(Ala) in a two-step reaction: alanine is first activated by ATP to form Ala-AMP and then transferred to the acceptor end of tRNA(Ala). Also edits incorrectly charged Ser-tRNA(Ala) and Gly-tRNA(Ala) via its editing domain. This is Alanine--tRNA ligase from Gluconobacter oxydans (strain 621H) (Gluconobacter suboxydans).